Reading from the N-terminus, the 719-residue chain is Glutathionylspermidine synthase (719 aa).

Residues 54 to 200 (CLPLSSFERK…TESGEVELLD (147 aa)) form the Peptidase C51 domain. R350 is a binding site for glutathione. 350-352 (RFD) provides a ligand contact to ATP. Mg(2+) contacts are provided by D352, E364, and N366. Residue S369 coordinates glutathione. E432 is a binding site for spermidine. Glutathione is bound by residues E433 and T501. ATP-binding positions include K544, K579, G586, Q653, and 689–691 (KIT).

The protein in the C-terminal section; belongs to the glutathionylspermidine synthase preATP-grasp family. It depends on Mg(2+) as a cofactor. In terms of processing, the N-terminus is blocked.

It carries out the reaction spermidine + glutathione + ATP = glutathionylspermidine + ADP + phosphate + H(+). Its function is as follows. Conjugates glutathione (gamma-Glu-Cys-Gly) and spermidine to form glutathionylspermidine in the biosynthesis trypanothione (N(1),N(8)-bis(glutathionyl)spermidine), which is involved in maintaining intracellular thiol redox and in defense against oxidants. This Crithidia fasciculata protein is Glutathionylspermidine synthase (GSP).